A 233-amino-acid polypeptide reads, in one-letter code: Ribose-5-phosphate isomerase A (233 aa).

Residues 28 to 31, 83 to 86, and 96 to 99 each bind substrate; these read TGST, DGAD, and KGGG. Glutamate 105 (proton acceptor) is an active-site residue. Lysine 123 lines the substrate pocket.

The protein belongs to the ribose 5-phosphate isomerase family. Homodimer.

The catalysed reaction is aldehydo-D-ribose 5-phosphate = D-ribulose 5-phosphate. It participates in carbohydrate degradation; pentose phosphate pathway; D-ribose 5-phosphate from D-ribulose 5-phosphate (non-oxidative stage): step 1/1. Its function is as follows. Catalyzes the reversible conversion of ribose-5-phosphate to ribulose 5-phosphate. The chain is Ribose-5-phosphate isomerase A from Rhizobium rhizogenes (strain K84 / ATCC BAA-868) (Agrobacterium radiobacter).